Reading from the N-terminus, the 525-residue chain is ATP synthase subunit alpha (525 aa).

169 to 176 contributes to the ATP binding site; it reads GDRQTGKT.

It belongs to the ATPase alpha/beta chains family. As to quaternary structure, F-type ATPases have 2 components, CF(1) - the catalytic core - and CF(0) - the membrane proton channel. CF(1) has five subunits: alpha(3), beta(3), gamma(1), delta(1), epsilon(1). CF(0) has three main subunits: a(1), b(2) and c(9-12). The alpha and beta chains form an alternating ring which encloses part of the gamma chain. CF(1) is attached to CF(0) by a central stalk formed by the gamma and epsilon chains, while a peripheral stalk is formed by the delta and b chains.

The protein resides in the cell membrane. It catalyses the reaction ATP + H2O + 4 H(+)(in) = ADP + phosphate + 5 H(+)(out). In terms of biological role, produces ATP from ADP in the presence of a proton gradient across the membrane. The alpha chain is a regulatory subunit. This Mycoplasma mycoides subsp. mycoides SC (strain CCUG 32753 / NCTC 10114 / PG1) protein is ATP synthase subunit alpha.